Reading from the N-terminus, the 181-residue chain is ADP-ribosylation factor 1-like 2 (181 aa).

Gly-2 carries N-myristoyl glycine lipidation. The tract at residues 3–16 is important for the stable binding to the membranes; that stretch reads NVFGSLFKGLFGKR. Residues 24-32, 126-129, and Ala-160 contribute to the GTP site; these read GLDAAGKTT and NKQD.

This sequence belongs to the small GTPase superfamily. Arf family. As to expression, expressed in hypodermis, intestine, spermatheca, uterus, gonadal sheath, vulva cells, pharynx muscle, body wall muscle, head neurons, ventral nerve cord.

The protein resides in the golgi apparatus membrane. The catalysed reaction is GTP + H2O = GDP + phosphate + H(+). Its activity is regulated as follows. Alternates between an inactive GDP-bound form and an active GTP-bound form. Activated by a guanine nucleotide-exchange factor (GEF) and inactivated by GTPase-activating protein (GAP). Its function is as follows. Small GTPase involved in protein trafficking between different compartments. Modulates vesicle budding and uncoating within the Golgi complex. In its GTP-bound form, triggers the recruitment of coatomer proteins to the Golgi membrane. The hydrolysis of ARF1-bound GTP, which is mediated by ARFGAPs proteins, is required for dissociation of coat proteins from Golgi membranes and vesicles. Involved in endoplasmic reticulum dynamics during embryogenesis. Also required for adult germline function. Plays a role in cell shedding during embryogenesis probably by promoting the endocytosis of cell adhesion molecules. During neurogenesis, involved in cell autonomous Q.p neuroblast asymmetric divisions that generate one precursor cell and one apoptotic cell, probably by controlling endocytosis. Plays a role in maintaining mitochondrial morphology. This chain is ADP-ribosylation factor 1-like 2, found in Caenorhabditis elegans.